Here is a 137-residue protein sequence, read N- to C-terminus: Proofreading thioesterase EntH (137 aa).

The active-site Nucleophile or proton acceptor is E63.

It belongs to the thioesterase PaaI family. Homotetramer. Dimer of dimers. Interacts specifically with the aryl carrier protein (ArCP) domain of EntB.

It localises to the cytoplasm. It participates in siderophore biosynthesis; enterobactin biosynthesis. Required for optimal enterobactin synthesis. Acts as a proofreading enzyme that prevents EntB misacylation by hydrolyzing the thioester bound existing between EntB and wrongly charged molecules. This Enterobacter lignolyticus (strain SCF1) protein is Proofreading thioesterase EntH.